The primary structure comprises 387 residues: Eukaryotic translation initiation factor 3 subunit M (387 aa).

The region spanning 181–340 is the PCI domain; that stretch reads LSSKVMIELL…RKVHISSTMH (160 aa).

Belongs to the eIF-3 subunit M family. Component of the eukaryotic translation initiation factor 3 (eIF-3) complex. The eIF-3 complex interacts with pix.

It localises to the cytoplasm. Its subcellular location is the golgi apparatus. Component of the eukaryotic translation initiation factor 3 (eIF-3) complex, which is involved in protein synthesis of a specialized repertoire of mRNAs and, together with other initiation factors, stimulates binding of mRNA and methionyl-tRNAi to the 40S ribosome. The eIF-3 complex specifically targets and initiates translation of a subset of mRNAs involved in cell proliferation. This Drosophila ananassae (Fruit fly) protein is Eukaryotic translation initiation factor 3 subunit M.